Consider the following 97-residue polypeptide: MSIEPLTDEERADALDALPDWDYDDGRDAISRSFTFPDFSAAFAFMTRVALYAEKHDHHPEWSNVWNRVDILLTTHDAGGLSHRDVAMAEAIEALAE.

This sequence belongs to the pterin-4-alpha-carbinolamine dehydratase family.

It catalyses the reaction (4aS,6R)-4a-hydroxy-L-erythro-5,6,7,8-tetrahydrobiopterin = (6R)-L-erythro-6,7-dihydrobiopterin + H2O. The polypeptide is Putative pterin-4-alpha-carbinolamine dehydratase (Rhizorhabdus wittichii (strain DSM 6014 / CCUG 31198 / JCM 15750 / NBRC 105917 / EY 4224 / RW1) (Sphingomonas wittichii)).